Reading from the N-terminus, the 477-residue chain is Probable cytosol aminopeptidase (477 aa).

Mn(2+) contacts are provided by lysine 245 and aspartate 250. The active site involves lysine 257. Aspartate 268, aspartate 327, and glutamate 329 together coordinate Mn(2+). Arginine 331 is an active-site residue.

The protein belongs to the peptidase M17 family. Requires Mn(2+) as cofactor.

The protein resides in the cytoplasm. The catalysed reaction is Release of an N-terminal amino acid, Xaa-|-Yaa-, in which Xaa is preferably Leu, but may be other amino acids including Pro although not Arg or Lys, and Yaa may be Pro. Amino acid amides and methyl esters are also readily hydrolyzed, but rates on arylamides are exceedingly low.. The enzyme catalyses Release of an N-terminal amino acid, preferentially leucine, but not glutamic or aspartic acids.. Its function is as follows. Presumably involved in the processing and regular turnover of intracellular proteins. Catalyzes the removal of unsubstituted N-terminal amino acids from various peptides. The protein is Probable cytosol aminopeptidase of Exiguobacterium sibiricum (strain DSM 17290 / CCUG 55495 / CIP 109462 / JCM 13490 / 255-15).